A 125-amino-acid polypeptide reads, in one-letter code: Napin-3 (125 aa).

4 disulfide bridges follow: Cys-10–Cys-62, Cys-23–Cys-51, Cys-52–Cys-107, and Cys-64–Cys-115.

The protein belongs to the 2S seed storage albumins family. The mature protein consists of a small and a large chain linked by disulfide bonds.

Functionally, the small, basic, water-soluble napins are one of the two major kinds of storage proteins synthesized in the seed during its maturation. This chain is Napin-3, found in Brassica napus (Rape).